Reading from the N-terminus, the 486-residue chain is N-succinylglutamate 5-semialdehyde dehydrogenase (486 aa).

NAD(+) is bound at residue 220-225 (GSSRTG). Residues glutamate 243 and cysteine 277 contribute to the active site.

It belongs to the aldehyde dehydrogenase family. AstD subfamily.

The catalysed reaction is N-succinyl-L-glutamate 5-semialdehyde + NAD(+) + H2O = N-succinyl-L-glutamate + NADH + 2 H(+). It functions in the pathway amino-acid degradation; L-arginine degradation via AST pathway; L-glutamate and succinate from L-arginine: step 4/5. Its function is as follows. Catalyzes the NAD-dependent reduction of succinylglutamate semialdehyde into succinylglutamate. The chain is N-succinylglutamate 5-semialdehyde dehydrogenase from Shewanella woodyi (strain ATCC 51908 / MS32).